A 713-amino-acid polypeptide reads, in one-letter code: KNR4/SMI1 homolog (713 aa).

Disordered regions lie at residues 18-129, 255-274, 400-457, and 500-713; these read PDRY…VTRD, IFIN…SPVA, RHQM…SKPA, and EPLE…KGKK. A compositionally biased stretch (low complexity) spans 22 to 34; the sequence is ASQQRSSKASQSA. Positions 35-65 are enriched in polar residues; the sequence is GANSQNRPLYNNDDNQSEMYQASSSYTGGYT. 2 stretches are compositionally biased toward low complexity: residues 66 to 81 and 88 to 103; these read NSPS…GAAA and SSRN…SSTS. Residues 260–270 are compositionally biased toward polar residues; sequence NAGSPNSSTPG. Basic and acidic residues predominate over residues 400 to 412; that stretch reads RHQMQRREHERRQ. A compositionally biased stretch (low complexity) spans 413–429; that stretch reads AAAAAQQQQQQQQHHAQ. Basic and acidic residues-rich tracts occupy residues 507 to 605 and 613 to 662; these read EIKG…EEQK and AKAE…KIDE. The segment covering 663 to 686 has biased composition (acidic residues); that stretch reads ENGNAEEADEEADDDDEDDEEEGD. Basic residues predominate over residues 701 to 713; the sequence is SKSKKKNKKKGKK.

It belongs to the KNR4/SMI1 family.

This Yarrowia lipolytica (strain CLIB 122 / E 150) (Yeast) protein is KNR4/SMI1 homolog.